We begin with the raw amino-acid sequence, 426 residues long: UDP-N-acetylglucosamine 1-carboxyvinyltransferase (426 aa).

Residue 22–23 coordinates phosphoenolpyruvate; sequence KN. Arg-94 serves as a coordination point for UDP-N-acetyl-alpha-D-glucosamine. Cys-118 functions as the Proton donor in the catalytic mechanism. Residue Cys-118 is modified to 2-(S-cysteinyl)pyruvic acid O-phosphothioketal. UDP-N-acetyl-alpha-D-glucosamine-binding positions include 123–127, Asp-310, and Ile-332; that span reads RPVDL.

Belongs to the EPSP synthase family. MurA subfamily.

The protein localises to the cytoplasm. It catalyses the reaction phosphoenolpyruvate + UDP-N-acetyl-alpha-D-glucosamine = UDP-N-acetyl-3-O-(1-carboxyvinyl)-alpha-D-glucosamine + phosphate. The protein operates within cell wall biogenesis; peptidoglycan biosynthesis. Its function is as follows. Cell wall formation. Adds enolpyruvyl to UDP-N-acetylglucosamine. In Hyphomonas neptunium (strain ATCC 15444), this protein is UDP-N-acetylglucosamine 1-carboxyvinyltransferase.